The primary structure comprises 464 residues: DNA repair protein KRE29 (464 aa).

A disordered region spans residues 1-69; it reads MGSVNSSPNE…SDEEFSSLEN (69 aa). Acidic residues predominate over residues 53–65; that stretch reads PENDSLNSDEEFS. 2 positions are modified to phosphoserine: serine 81 and serine 101.

Component of the Smc5-Smc6 complex which consists of KRE29, MMS21, NSE1, NSE3, NSE4, NSE5, SMC5 and SMC6. Interacts with NSE5.

The protein resides in the nucleus. It localises to the cytoplasm. Acts in a DNA repair pathway for removal of UV-induced DNA damage that is distinct from classical nucleotide excision repair and in repair of ionizing radiation damage. Functions in homologous recombination repair of DNA double strand breaks and in recovery of stalled replication forks. This is DNA repair protein KRE29 (KRE29) from Saccharomyces cerevisiae (strain ATCC 204508 / S288c) (Baker's yeast).